The primary structure comprises 179 residues: GTP-dependent dephospho-CoA kinase (179 aa).

The GTP site is built by aspartate 43, valine 45, aspartate 62, glutamate 120, and aspartate 143.

The protein belongs to the GTP-dependent DPCK family.

The enzyme catalyses 3'-dephospho-CoA + GTP = GDP + CoA + H(+). The protein operates within cofactor biosynthesis; coenzyme A biosynthesis. Functionally, catalyzes the GTP-dependent phosphorylation of the 3'-hydroxyl group of dephosphocoenzyme A to form coenzyme A (CoA). The sequence is that of GTP-dependent dephospho-CoA kinase from Haloarcula marismortui (strain ATCC 43049 / DSM 3752 / JCM 8966 / VKM B-1809) (Halobacterium marismortui).